The following is a 457-amino-acid chain: MKVNVIGAGLAGSEAAYFLANKGIKVRMFEMRPITSHFTSRQDEKTGTHDVRNATQTRPITTTEAHKTDKFGELVCSNTLGSFEITTGAGLLKKEMELLNSLVIKAAKHSYVKAGSALAVDRNEFSDFITKTILSHPNIEVVREEVESLNENELNIVATGPLTSEKFSKYLKNLITDDYLYFYDAIAPIVEASSVDFSKGFWGSRYDKGDDYFNCTMTKEEYDIFYNELLKAEKVPTKDFERVVHFEGCLPIEEIASRGYETLVFGPMSPKGLKHHISKDVYAIVQLRKETKEGEALSLVGFQTKLTYKEQVRVFRLIPCLRNAVFSRLGSMHRNTFLQSNKLLKPTLELRKNPNILFAGQITGVEGYSASAATGIIAGINAWLKLEGKEPTTPPKTTMLGALLDYISSKEGELQPMNPVFGLLPDIEVHKKHKKLLKAYRALFDMKKFIEHHKIYD.

Residue Gly-7–Gly-12 participates in FAD binding. Positions Phe-38–Arg-58 are disordered. Residues Ser-40–Arg-52 show a composition bias toward basic and acidic residues.

The protein belongs to the MnmG family. TrmFO subfamily. It depends on FAD as a cofactor.

The protein resides in the cytoplasm. It carries out the reaction uridine(54) in tRNA + (6R)-5,10-methylene-5,6,7,8-tetrahydrofolate + NADH + H(+) = 5-methyluridine(54) in tRNA + (6S)-5,6,7,8-tetrahydrofolate + NAD(+). The catalysed reaction is uridine(54) in tRNA + (6R)-5,10-methylene-5,6,7,8-tetrahydrofolate + NADPH + H(+) = 5-methyluridine(54) in tRNA + (6S)-5,6,7,8-tetrahydrofolate + NADP(+). In terms of biological role, catalyzes the folate-dependent formation of 5-methyl-uridine at position 54 (M-5-U54) in all tRNAs. The protein is Methylenetetrahydrofolate--tRNA-(uracil-5-)-methyltransferase TrmFO of Hydrogenobaculum sp. (strain Y04AAS1).